The chain runs to 118 residues: NADH-ubiquinone oxidoreductase chain 3 (118 aa).

3 consecutive transmembrane segments (helical) span residues 7-27, 62-82, and 87-107; these read IFIY…LPFL, LVSI…PWAV, and IDLF…IGFL.

It belongs to the complex I subunit 3 family.

It localises to the mitochondrion membrane. It catalyses the reaction a ubiquinone + NADH + 5 H(+)(in) = a ubiquinol + NAD(+) + 4 H(+)(out). In terms of biological role, core subunit of the mitochondrial membrane respiratory chain NADH dehydrogenase (Complex I) that is believed to belong to the minimal assembly required for catalysis. Complex I functions in the transfer of electrons from NADH to the respiratory chain. The immediate electron acceptor for the enzyme is believed to be ubiquinone. This Allium cepa (Onion) protein is NADH-ubiquinone oxidoreductase chain 3 (ND3).